The following is a 30-amino-acid chain: V-type proton ATPase catalytic subunit A isoform 1 (30 aa).

It belongs to the ATPase alpha/beta chains family. As to quaternary structure, V-ATPase is a heteromultimeric enzyme composed of a peripheral catalytic V1 complex (main components: subunits A, B, C, D, E, and F) attached to an integral membrane V0 proton pore complex (main component: the proteolipid protein).

The enzyme catalyses ATP + H2O + 4 H(+)(in) = ADP + phosphate + 5 H(+)(out). Its function is as follows. Catalytic subunit of the peripheral V1 complex of vacuolar ATPase. V-ATPase vacuolar ATPase is responsible for acidifying a variety of intracellular compartments in eukaryotic cells. This chain is V-type proton ATPase catalytic subunit A isoform 1, found in Psilotum nudum (Whisk fern).